A 188-amino-acid chain; its full sequence is Preprocaerulein type-1 (188 aa).

The signal sequence occupies residues 1 to 26 (MFKGILLCVLFAVLSANPLSQPEGFA). Residues 27-170 (DEERDVRGLA…ANDERRFADG (144 aa)) constitute a propeptide that is removed on maturation. The interval 152–188 (LGGSPQQREANDERRFADGQQDYTGWMDFGRRNGEDD) is disordered. Sulfotyrosine is present on Tyr174. Phenylalanine amide is present on Phe180. Positions 184–188 (NGEDD) are excised as a propeptide.

Belongs to the gastrin/cholecystokinin family. In terms of tissue distribution, expressed by the skin glands.

The protein resides in the secreted. In terms of biological role, the pharmacological activities of caerulein are quite similar to the physiological activities of gastrin and related peptides. This is Preprocaerulein type-1 from Xenopus laevis (African clawed frog).